A 160-amino-acid chain; its full sequence is MSKKKANAPTSNTIALNKKAKHEYHIEERFEAGLALLGWEVKSLRAGKAQLVDAYVLLKDGEAWLLGSHITPLNTASTHVIADPTRTRKLLLHAKEIAKIVGQVNQAGYTCIPLALYWKKNKVKCEIALVKGKKLFDKRATEKERDWNRQKQRIMREANT.

The protein belongs to the SmpB family.

It is found in the cytoplasm. Functionally, required for rescue of stalled ribosomes mediated by trans-translation. Binds to transfer-messenger RNA (tmRNA), required for stable association of tmRNA with ribosomes. tmRNA and SmpB together mimic tRNA shape, replacing the anticodon stem-loop with SmpB. tmRNA is encoded by the ssrA gene; the 2 termini fold to resemble tRNA(Ala) and it encodes a 'tag peptide', a short internal open reading frame. During trans-translation Ala-aminoacylated tmRNA acts like a tRNA, entering the A-site of stalled ribosomes, displacing the stalled mRNA. The ribosome then switches to translate the ORF on the tmRNA; the nascent peptide is terminated with the 'tag peptide' encoded by the tmRNA and targeted for degradation. The ribosome is freed to recommence translation, which seems to be the essential function of trans-translation. The chain is SsrA-binding protein from Marinobacter nauticus (strain ATCC 700491 / DSM 11845 / VT8) (Marinobacter aquaeolei).